The primary structure comprises 591 residues: MMRSHYCGQLNESLEGQEITLCGWVHRRRDHGGVIFLDIRDREGMAQVVFDPDRADSFAAADRVRSEYVVKVVGKVRARPAGAVNANMASGAIEVLGYELEVLNESETPPFPLNEYSDVGEETRLRYRFIDLRRPEMAEKLRLRSRITTSIRRYLDDNGFLDVETPILTRATPEGARDYLVPSRTHPGSFFALPQSPQLFKQLLMVAGFDRYYQIAKCFRDEDLRADRQPEFTQIDIETSFLNEEDIIGLTEKMVRQLFKEVLDLEFGDFPHMTFEEAMRRYGSDKPDLRNPLELVDVADQLTGVEFKVFSGPANDPKGRVAALRVPGAASMARSQIDDYTKFVSIYGAKGLAYIKVNERAKGPEGLQSPIVKFIPEDNLNVILDRVGAVDGDIVFFGADKFKIVSEALGALRIKIGNDLKLHTCEWAPMWVVDFPMFEENDDGSFTALHHPFTAPKCTPEELEANPATALSRAYDMVLNGTELGGGSIRIHRKEMQQAVFRLLGIAEDEQQEKFGFLLDALKYGAPPHGGLAFGLDRLVMLMTGAQSIREVIAFPKTQSAADVMTQAPGVVDAKALRELHIRLREQPKAE.

L-aspartate is bound at residue Glu-174. Residues 198-201 (QLFK) are aspartate. Residue Arg-220 coordinates L-aspartate. Residues 220 to 222 (RDE) and Gln-229 each bind ATP. His-450 contributes to the L-aspartate binding site. Glu-483 is an ATP binding site. Arg-490 contacts L-aspartate. Position 535–538 (535–538 (GLDR)) interacts with ATP.

This sequence belongs to the class-II aminoacyl-tRNA synthetase family. Type 1 subfamily. In terms of assembly, homodimer.

It localises to the cytoplasm. The enzyme catalyses tRNA(Asx) + L-aspartate + ATP = L-aspartyl-tRNA(Asx) + AMP + diphosphate. Aspartyl-tRNA synthetase with relaxed tRNA specificity since it is able to aspartylate not only its cognate tRNA(Asp) but also tRNA(Asn). Reaction proceeds in two steps: L-aspartate is first activated by ATP to form Asp-AMP and then transferred to the acceptor end of tRNA(Asp/Asn). In Pseudomonas syringae pv. syringae (strain B728a), this protein is Aspartate--tRNA(Asp/Asn) ligase.